We begin with the raw amino-acid sequence, 712 residues long: Polyribonucleotide nucleotidyltransferase (712 aa).

Residues Asp484 and Asp490 each contribute to the Mg(2+) site. Positions 551-610 (PKVFTIQIHPDKIRDIIGPGGKVIRAIQAETGTRVDVDDSGLVKVSAVNLEEGEAALQMI) constitute a KH domain. In terms of domain architecture, S1 motif spans 620 to 688 (GAVYEGTVVK…KDGKIRLSRK (69 aa)). The segment at 689 to 712 (ALLEEENGKSGPENGAPQRDKNRH) is disordered.

This sequence belongs to the polyribonucleotide nucleotidyltransferase family. Requires Mg(2+) as cofactor.

It localises to the cytoplasm. The catalysed reaction is RNA(n+1) + phosphate = RNA(n) + a ribonucleoside 5'-diphosphate. In terms of biological role, involved in mRNA degradation. Catalyzes the phosphorolysis of single-stranded polyribonucleotides processively in the 3'- to 5'-direction. This chain is Polyribonucleotide nucleotidyltransferase, found in Desulfatibacillum aliphaticivorans.